The following is a 740-amino-acid chain: MAPSFDTLTEQDLHEEEEEEIDFSDLKEQYEVKLEEGLDTFVVIDGLPVVPEESRQKLIKFLLRKLNTVGHTSEDAVFMPLNDKNMSEGFAFVEYETPEQAIAAVKQLHGVPLDKKHTLAVNKLMDIDRYGREGRIDEEYKPPTIEPFKEKEHLRSWLGDANARDQFALYRGDKVGVFWNNKSNPPENVVDRAHWTQLFVQWSPKGTYLASVHPQGVQLWGGPAFSKQKQFPHPFVQLVEFSPGESYLTTWSARPIQVEEGHPVLTYEEDGKNIIIWDIVTGKPLRSFVSHDLTAGPGGDGEPKKKVQWPAFKWSADEKYVARMQQHQSISIYELPRMNLLGKTSVKIDGVMDFEWSPATVVREGVKQYEQLLCFWTPEIGSNPARVALMSVPSKEIVRTRNLFNVSDVKLHWQSQGTYVCVKVDRHSKSKKSMATNLEIFRVREKGVPVEVVDSLKDTVINFAWEPNGGRFVAITTGEAPSGAAVLPKTSVSFFAPEKKGVSAGNFKVVRTIEKKTSNAIYWSPKGRFVVVATVHSQTNFDIDFWDMDFEGEKPEGEKDLAANLQLMKTVEHYGVTDIDWDPTGRYVVSSASVWTHSMENGYNIHTFAGQTLAEHPTDKFKQFIWRPRPPTLLSKEEQKQVRKNLREYSKEFDEEDKYAVDIANTAVVETRKRVLNEWAAWIRREKEMLAEEKDAYGVPEDVDSSKQAKDAPAVSEDQGETVVEEIVEEIIEENEEVIG.

Over residues 1 to 10 (MAPSFDTLTE) the composition is skewed to polar residues. Residues 1-22 (MAPSFDTLTEQDLHEEEEEEID) form a disordered region. The segment covering 13–22 (LHEEEEEEID) has biased composition (acidic residues). Positions 40 to 126 (TFVVIDGLPV…HTLAVNKLMD (87 aa)) constitute an RRM domain. 5 WD repeats span residues 193–230 (AHWT…KQKQ), 232–289 (PHPF…RSFV), 302–343 (EPKK…LLGK), 513–556 (IEKK…EKPE), and 571–609 (VEHY…HTFA). The disordered stretch occupies residues 695-721 (DAYGVPEDVDSSKQAKDAPAVSEDQGE).

The protein belongs to the eIF-3 subunit B family. Component of the eukaryotic translation initiation factor 3 (eIF-3) complex.

Its subcellular location is the cytoplasm. Its function is as follows. RNA-binding component of the eukaryotic translation initiation factor 3 (eIF-3) complex, which is involved in protein synthesis of a specialized repertoire of mRNAs and, together with other initiation factors, stimulates binding of mRNA and methionyl-tRNAi to the 40S ribosome. The eIF-3 complex specifically targets and initiates translation of a subset of mRNAs involved in cell proliferation. The chain is Eukaryotic translation initiation factor 3 subunit B (prt1) from Aspergillus niger (strain ATCC MYA-4892 / CBS 513.88 / FGSC A1513).